The following is a 968-amino-acid chain: RNA polymerase-associated protein RapA (968 aa).

A Helicase ATP-binding domain is found at 164–334; that stretch reads DVGRRHAPRV…FARLRLLDPN (171 aa). Residue 177–184 coordinates ATP; it reads DEVGLGKT. The DEAH box motif lies at 280–283; that stretch reads DEAH. Residues 490–662 form the Helicase C-terminal domain; the sequence is RVEWLMGYLT…YLASPDQTEG (173 aa).

It belongs to the SNF2/RAD54 helicase family. RapA subfamily. In terms of assembly, interacts with the RNAP. Has a higher affinity for the core RNAP than for the holoenzyme. Its ATPase activity is stimulated by binding to RNAP.

Its function is as follows. Transcription regulator that activates transcription by stimulating RNA polymerase (RNAP) recycling in case of stress conditions such as supercoiled DNA or high salt concentrations. Probably acts by releasing the RNAP, when it is trapped or immobilized on tightly supercoiled DNA. Does not activate transcription on linear DNA. Probably not involved in DNA repair. The protein is RNA polymerase-associated protein RapA of Shigella boydii serotype 4 (strain Sb227).